The following is a 342-amino-acid chain: N-acetyl-gamma-glutamyl-phosphate reductase (342 aa).

Cys-147 is a catalytic residue.

Belongs to the NAGSA dehydrogenase family. Type 1 subfamily.

It localises to the cytoplasm. It catalyses the reaction N-acetyl-L-glutamate 5-semialdehyde + phosphate + NADP(+) = N-acetyl-L-glutamyl 5-phosphate + NADPH + H(+). The protein operates within amino-acid biosynthesis; L-arginine biosynthesis; N(2)-acetyl-L-ornithine from L-glutamate: step 3/4. Catalyzes the NADPH-dependent reduction of N-acetyl-5-glutamyl phosphate to yield N-acetyl-L-glutamate 5-semialdehyde. This Campylobacter jejuni subsp. jejuni serotype O:6 (strain 81116 / NCTC 11828) protein is N-acetyl-gamma-glutamyl-phosphate reductase.